Here is a 344-residue protein sequence, read N- to C-terminus: Putative transport protein sll0060 (344 aa).

The next 8 membrane-spanning stretches (helical) occupy residues 14–34 (LWIGLTLPLCLLNGWVLLQIL), 41–61 (LRIFIIANLVAFILGYPVRWL), 72–92 (AVALVLLTTAIILAVIGLLVI), 155–175 (LINLLIWTAGSLVEAGFIFIM), 215–235 (IGQATVAALLGVSLIISLSIF), 237–257 (VPLALLFGMFVGFMAFFPFGG), 262–282 (VLISIIASFQSIWLGIKVLAI), and 310–330 (ILLSLMIGAKVAGLLGILVAI).

It belongs to the autoinducer-2 exporter (AI-2E) (TC 2.A.86) family.

The protein localises to the cell membrane. This is Putative transport protein sll0060 from Synechocystis sp. (strain ATCC 27184 / PCC 6803 / Kazusa).